The primary structure comprises 257 residues: Imidazole glycerol phosphate synthase subunit HisF (257 aa).

Active-site residues include aspartate 12 and aspartate 131.

It belongs to the HisA/HisF family. As to quaternary structure, heterodimer of HisH and HisF.

It localises to the cytoplasm. It catalyses the reaction 5-[(5-phospho-1-deoxy-D-ribulos-1-ylimino)methylamino]-1-(5-phospho-beta-D-ribosyl)imidazole-4-carboxamide + L-glutamine = D-erythro-1-(imidazol-4-yl)glycerol 3-phosphate + 5-amino-1-(5-phospho-beta-D-ribosyl)imidazole-4-carboxamide + L-glutamate + H(+). It participates in amino-acid biosynthesis; L-histidine biosynthesis; L-histidine from 5-phospho-alpha-D-ribose 1-diphosphate: step 5/9. Its function is as follows. IGPS catalyzes the conversion of PRFAR and glutamine to IGP, AICAR and glutamate. The HisF subunit catalyzes the cyclization activity that produces IGP and AICAR from PRFAR using the ammonia provided by the HisH subunit. In Marinomonas sp. (strain MWYL1), this protein is Imidazole glycerol phosphate synthase subunit HisF.